The following is a 386-amino-acid chain: S-adenosylmethionine synthase (386 aa).

His14 is an ATP binding site. Asp16 lines the Mg(2+) pocket. Glu42 contributes to the K(+) binding site. L-methionine is bound by residues Glu55 and Gln101. A flexible loop region spans residues 101-111; it reads QSADIALGVDE. Residues 166–168, 233–234, Asp242, 248–249, Ala265, and Lys269 each bind ATP; these read DGK, RF, and RK. Asp242 serves as a coordination point for L-methionine. Lys273 serves as a coordination point for L-methionine.

This sequence belongs to the AdoMet synthase family. Homotetramer; dimer of dimers. Requires Mg(2+) as cofactor. The cofactor is K(+).

The protein resides in the cytoplasm. The enzyme catalyses L-methionine + ATP + H2O = S-adenosyl-L-methionine + phosphate + diphosphate. It participates in amino-acid biosynthesis; S-adenosyl-L-methionine biosynthesis; S-adenosyl-L-methionine from L-methionine: step 1/1. In terms of biological role, catalyzes the formation of S-adenosylmethionine (AdoMet) from methionine and ATP. The overall synthetic reaction is composed of two sequential steps, AdoMet formation and the subsequent tripolyphosphate hydrolysis which occurs prior to release of AdoMet from the enzyme. The polypeptide is S-adenosylmethionine synthase (Acholeplasma laidlawii (strain PG-8A)).